We begin with the raw amino-acid sequence, 107 residues long: U1-lycotoxin-Ls1e (107 aa).

Residues 1 to 20 (MMKVLVVVALLVTLISYSSS) form the signal peptide. A propeptide spanning residues 21–41 (EGIDDLEADELLSLMANEQTR) is cleaved from the precursor. 4 cysteine pairs are disulfide-bonded: C44-C59, C51-C68, C58-C86, and C70-C84.

Belongs to the neurotoxin 19 (CSTX) family. 04 (U1-Lctx) subfamily. Expressed by the venom gland.

It localises to the secreted. In Lycosa singoriensis (Wolf spider), this protein is U1-lycotoxin-Ls1e.